The following is a 385-amino-acid chain: Phosphate acyltransferase (385 aa).

Positions 1–17 are enriched in low complexity; it reads MAAGTSIGTTPGGSTSP. Residues 1–28 form a disordered region; that stretch reads MAAGTSIGTTPGGSTSPETPPEHGLTGT.

It belongs to the PlsX family. In terms of assembly, homodimer. Probably interacts with PlsY.

Its subcellular location is the cytoplasm. It carries out the reaction a fatty acyl-[ACP] + phosphate = an acyl phosphate + holo-[ACP]. It participates in lipid metabolism; phospholipid metabolism. Catalyzes the reversible formation of acyl-phosphate (acyl-PO(4)) from acyl-[acyl-carrier-protein] (acyl-ACP). This enzyme utilizes acyl-ACP as fatty acyl donor, but not acyl-CoA. The polypeptide is Phosphate acyltransferase (Dinoroseobacter shibae (strain DSM 16493 / NCIMB 14021 / DFL 12)).